The chain runs to 229 residues: 2,3-bisphosphoglycerate-dependent phosphoglycerate mutase (229 aa).

Substrate is bound by residues 7–14, 20–21, R59, 86–89, K97, 113–114, and 182–183; these read RHGQSEWN, TG, ERHY, RR, and GN. H8 serves as the catalytic Tele-phosphohistidine intermediate. The active-site Proton donor/acceptor is E86.

The protein belongs to the phosphoglycerate mutase family. BPG-dependent PGAM subfamily.

The enzyme catalyses (2R)-2-phosphoglycerate = (2R)-3-phosphoglycerate. Its pathway is carbohydrate degradation; glycolysis; pyruvate from D-glyceraldehyde 3-phosphate: step 3/5. In terms of biological role, catalyzes the interconversion of 2-phosphoglycerate and 3-phosphoglycerate. This is 2,3-bisphosphoglycerate-dependent phosphoglycerate mutase from Listeria innocua serovar 6a (strain ATCC BAA-680 / CLIP 11262).